A 360-amino-acid polypeptide reads, in one-letter code: Carbamoyl phosphate synthase small chain (360 aa).

The interval methionine 1–isoleucine 169 is CPSase. L-glutamine-binding residues include serine 46, glycine 220, and glycine 222. The Glutamine amidotransferase type-1 domain occupies asparagine 172 to threonine 358. The Nucleophile role is filled by cysteine 247. L-glutamine is bound by residues methionine 248, glutamine 251, asparagine 289, glycine 291, and tyrosine 292. Catalysis depends on residues histidine 331 and aspartate 333.

This sequence belongs to the CarA family. Composed of two chains; the small (or glutamine) chain promotes the hydrolysis of glutamine to ammonia, which is used by the large (or ammonia) chain to synthesize carbamoyl phosphate. Tetramer of heterodimers (alpha,beta)4.

It catalyses the reaction hydrogencarbonate + L-glutamine + 2 ATP + H2O = carbamoyl phosphate + L-glutamate + 2 ADP + phosphate + 2 H(+). It carries out the reaction L-glutamine + H2O = L-glutamate + NH4(+). Its pathway is amino-acid biosynthesis; L-arginine biosynthesis; carbamoyl phosphate from bicarbonate: step 1/1. It participates in pyrimidine metabolism; UMP biosynthesis via de novo pathway; (S)-dihydroorotate from bicarbonate: step 1/3. Small subunit of the glutamine-dependent carbamoyl phosphate synthetase (CPSase). CPSase catalyzes the formation of carbamoyl phosphate from the ammonia moiety of glutamine, carbonate, and phosphate donated by ATP, constituting the first step of 2 biosynthetic pathways, one leading to arginine and/or urea and the other to pyrimidine nucleotides. The small subunit (glutamine amidotransferase) binds and cleaves glutamine to supply the large subunit with the substrate ammonia. This is Carbamoyl phosphate synthase small chain from Streptococcus pyogenes serotype M3 (strain SSI-1).